Consider the following 180-residue polypeptide: Bifunctional protein PyrR (180 aa).

The short motif at 101–113 (VILVDDVLYTGRT) is the PRPP-binding element.

Belongs to the purine/pyrimidine phosphoribosyltransferase family. PyrR subfamily. In terms of assembly, homodimer and homohexamer; in equilibrium.

The enzyme catalyses UMP + diphosphate = 5-phospho-alpha-D-ribose 1-diphosphate + uracil. Regulates transcriptional attenuation of the pyrimidine nucleotide (pyr) operon by binding in a uridine-dependent manner to specific sites on pyr mRNA. This disrupts an antiterminator hairpin in the RNA and favors formation of a downstream transcription terminator, leading to a reduced expression of downstream genes. In terms of biological role, also displays a weak uracil phosphoribosyltransferase activity which is not physiologically significant. This is Bifunctional protein PyrR from Bacillus thuringiensis subsp. konkukian (strain 97-27).